Reading from the N-terminus, the 482-residue chain is ATP synthase subunit beta, chloroplastic (482 aa).

Gly162–Thr169 is a binding site for ATP.

Belongs to the ATPase alpha/beta chains family. In terms of assembly, F-type ATPases have 2 components, CF(1) - the catalytic core - and CF(0) - the membrane proton channel. CF(1) has five subunits: alpha(3), beta(3), gamma(1), delta(1), epsilon(1). CF(0) has four main subunits: a(1), b(1), b'(1) and c(9-12).

The protein resides in the plastid. It is found in the chloroplast thylakoid membrane. The enzyme catalyses ATP + H2O + 4 H(+)(in) = ADP + phosphate + 5 H(+)(out). Its function is as follows. Produces ATP from ADP in the presence of a proton gradient across the membrane. The catalytic sites are hosted primarily by the beta subunits. This chain is ATP synthase subunit beta, chloroplastic, found in Pleurastrum terricola (Filamentous green alga).